Reading from the N-terminus, the 537-residue chain is Beta-galactoside alpha-2,6-sialyltransferase 2 (537 aa).

The Cytoplasmic portion of the chain corresponds to 1-10; sequence MKSWVRQGRR. Residues 11–31 form a helical; Signal-anchor for type II membrane protein membrane-spanning segment; the sequence is LVLVGMLAWVLLFLALLSYFL. Over 32–537 the chain is Lumenal; that stretch reads DARVNEPLTS…PGFSTVDCDI (506 aa). Disordered regions lie at residues 83-117 and 134-202; these read TRDE…PEGI and GTEN…GDSS. Polar residues predominate over residues 134 to 145; it reads GTENIGSQSDPV. Residues 166 to 185 show a composition bias toward acidic residues; that stretch reads EEEEEEEEEEERQENEDEDV. 3 disulfides stabilise this stretch: Cys-265/Cys-535, Cys-312/Cys-464, and Cys-482/Cys-493. 2 N-linked (GlcNAc...) asparagine glycosylation sites follow: Asn-353 and Asn-373.

This sequence belongs to the glycosyltransferase 29 family.

The protein localises to the golgi apparatus. It is found in the golgi stack membrane. The catalysed reaction is a beta-D-galactoside + CMP-N-acetyl-beta-neuraminate = an N-acetyl-alpha-neuraminyl-(2-&gt;6)-beta-D-galactosyl derivative + CMP + H(+). In terms of biological role, transfers sialic acid from the donor of substrate CMP-sialic acid to galactose containing acceptor substrates. The chain is Beta-galactoside alpha-2,6-sialyltransferase 2 (st6gal2) from Takifugu rubripes (Japanese pufferfish).